Here is a 264-residue protein sequence, read N- to C-terminus: Tryptophan synthase alpha chain (264 aa).

Residues Glu49 and Asp60 each act as proton acceptor in the active site.

Belongs to the TrpA family. In terms of assembly, tetramer of two alpha and two beta chains.

It catalyses the reaction (1S,2R)-1-C-(indol-3-yl)glycerol 3-phosphate + L-serine = D-glyceraldehyde 3-phosphate + L-tryptophan + H2O. The protein operates within amino-acid biosynthesis; L-tryptophan biosynthesis; L-tryptophan from chorismate: step 5/5. Functionally, the alpha subunit is responsible for the aldol cleavage of indoleglycerol phosphate to indole and glyceraldehyde 3-phosphate. The sequence is that of Tryptophan synthase alpha chain from Picosynechococcus sp. (strain ATCC 27264 / PCC 7002 / PR-6) (Agmenellum quadruplicatum).